A 229-amino-acid polypeptide reads, in one-letter code: DNA mismatch repair protein MutH (229 aa).

The protein belongs to the MutH family.

It is found in the cytoplasm. In terms of biological role, sequence-specific endonuclease that cleaves unmethylated GATC sequences. It is involved in DNA mismatch repair. This chain is DNA mismatch repair protein MutH, found in Shigella boydii serotype 18 (strain CDC 3083-94 / BS512).